We begin with the raw amino-acid sequence, 387 residues long: Succinyl-diaminopimelate desuccinylase (387 aa).

His-74 serves as a coordination point for Zn(2+). Asp-76 is a catalytic residue. Asp-107 serves as a coordination point for Zn(2+). The active-site Proton acceptor is Glu-142. Zn(2+) contacts are provided by Glu-143, Glu-171, and His-360.

The protein belongs to the peptidase M20A family. DapE subfamily. Homodimer. Zn(2+) is required as a cofactor. It depends on Co(2+) as a cofactor.

The catalysed reaction is N-succinyl-(2S,6S)-2,6-diaminopimelate + H2O = (2S,6S)-2,6-diaminopimelate + succinate. The protein operates within amino-acid biosynthesis; L-lysine biosynthesis via DAP pathway; LL-2,6-diaminopimelate from (S)-tetrahydrodipicolinate (succinylase route): step 3/3. Catalyzes the hydrolysis of N-succinyl-L,L-diaminopimelic acid (SDAP), forming succinate and LL-2,6-diaminopimelate (DAP), an intermediate involved in the bacterial biosynthesis of lysine and meso-diaminopimelic acid, an essential component of bacterial cell walls. The protein is Succinyl-diaminopimelate desuccinylase of Rhodopseudomonas palustris (strain BisA53).